Here is a 179-residue protein sequence, read N- to C-terminus: MASQNVDPAAASSVASRKGQESGTSAARGSVGKRLQQELMTLMMSGDKGISAFPESDNLFKWIGTIDGAVGTVYEDLRYKLSLEFPSGYPYNAPTVKFVTPCFHPNVDSHGNICLDILKDKWSALYDVRTILLSLQSLLGEPNNESPLNPYAAELWQNQTAYKKHLHEQYQKQVREKEI.

Positions 1-31 (MASQNVDPAAASSVASRKGQESGTSAARGSV) are disordered. Residues 30 to 179 (SVGKRLQQEL…YQKQVREKEI (150 aa)) form the UBC core domain. Cys114 (glycyl thioester intermediate) is an active-site residue.

Belongs to the ubiquitin-conjugating enzyme family. In terms of assembly, component of the APC/C complex. In terms of processing, autoubiquitinated by the APC/C complex, leading to its degradation by the proteasome.

It carries out the reaction S-ubiquitinyl-[E1 ubiquitin-activating enzyme]-L-cysteine + [E2 ubiquitin-conjugating enzyme]-L-cysteine = [E1 ubiquitin-activating enzyme]-L-cysteine + S-ubiquitinyl-[E2 ubiquitin-conjugating enzyme]-L-cysteine.. The catalysed reaction is S-ubiquitinyl-[E1 ubiquitin-activating enzyme]-L-cysteine + [acceptor protein]-L-lysine = [E1 ubiquitin-activating enzyme]-L-cysteine + N(6)-monoubiquitinyl-[acceptor protein]-L-lysine.. Its pathway is protein modification; protein ubiquitination. In terms of biological role, catalyzes the covalent attachment of ubiquitin to other proteins. Acts as an essential factor of the anaphase promoting complex/cyclosome (APC/C), a cell cycle-regulated ubiquitin ligase that controls progression through mitosis. Acts by initiating 'Lys-11'-linked polyubiquitin chains on APC/C substrates, leading to the degradation of APC/C substrates by the proteasome and promoting mitotic exit. This Xenopus laevis (African clawed frog) protein is Ubiquitin-conjugating enzyme E2 C (ube2c).